We begin with the raw amino-acid sequence, 312 residues long: Malate dehydrogenase (312 aa).

NAD(+) is bound by residues 7–13 and D34; that span reads GAAGGIG. Residues R81 and R87 each coordinate substrate. Residues N94 and 117-119 contribute to the NAD(+) site; that span reads ITN. N119 and R153 together coordinate substrate. H177 (proton acceptor) is an active-site residue. M227 serves as a coordination point for NAD(+).

The protein belongs to the LDH/MDH superfamily. MDH type 1 family. In terms of assembly, homodimer.

It carries out the reaction (S)-malate + NAD(+) = oxaloacetate + NADH + H(+). Catalyzes the reversible oxidation of malate to oxaloacetate. The sequence is that of Malate dehydrogenase from Photorhabdus laumondii subsp. laumondii (strain DSM 15139 / CIP 105565 / TT01) (Photorhabdus luminescens subsp. laumondii).